A 113-amino-acid polypeptide reads, in one-letter code: Integration host factor subunit alpha (113 aa).

Residues 88–113 form a disordered region; that stretch reads ALNGGVSDETEGADDDDDDEEGEGDE. Acidic residues predominate over residues 95-113; the sequence is DETEGADDDDDDEEGEGDE.

It belongs to the bacterial histone-like protein family. In terms of assembly, heterodimer of an alpha and a beta chain.

This protein is one of the two subunits of integration host factor, a specific DNA-binding protein that functions in genetic recombination as well as in transcriptional and translational control. This Anaeromyxobacter dehalogenans (strain 2CP-C) protein is Integration host factor subunit alpha.